A 509-amino-acid polypeptide reads, in one-letter code: Sorting nexin MVP1 (509 aa).

Residues 1 to 25 (MDTYSGQNGWADTSNASPWGDTNDT) show a composition bias toward polar residues. Positions 1-28 (MDTYSGQNGWADTSNASPWGDTNDTMPI) are disordered. A PX domain is found at 126–245 (QLDIISIEEI…TFLTVPTDLT (120 aa)). The a 1,2-diacyl-sn-glycero-3-phospho-(1D-myo-inositol-3-phosphate) site is built by arginine 170, serine 172, lysine 196, and arginine 211.

It belongs to the sorting nexin family.

It is found in the cytoplasm. It localises to the membrane. Required for vacuolar protein sorting. This is Sorting nexin MVP1 (MVP1) from Candida glabrata (strain ATCC 2001 / BCRC 20586 / JCM 3761 / NBRC 0622 / NRRL Y-65 / CBS 138) (Yeast).